We begin with the raw amino-acid sequence, 387 residues long: Galactokinase (387 aa).

Residue 36 to 39 (EHTD) coordinates substrate. Residues Ser70 and 125–131 (GAGLSSS) contribute to the ATP site. Mg(2+) is bound by residues Ser131 and Glu163. Asp175 functions as the Proton acceptor in the catalytic mechanism. Position 227 (Tyr227) interacts with substrate.

Belongs to the GHMP kinase family. GalK subfamily.

It localises to the cytoplasm. It carries out the reaction alpha-D-galactose + ATP = alpha-D-galactose 1-phosphate + ADP + H(+). Its pathway is carbohydrate metabolism; galactose metabolism. Catalyzes the transfer of the gamma-phosphate of ATP to D-galactose to form alpha-D-galactose-1-phosphate (Gal-1-P). The polypeptide is Galactokinase (Streptomyces coelicolor (strain ATCC BAA-471 / A3(2) / M145)).